Reading from the N-terminus, the 539-residue chain is Netrin-G1 (539 aa).

The signal sequence occupies residues 1 to 18 (MYLSRFLSIHALWVTVSS). 3 cysteine pairs are disulfide-bonded: cysteine 33–cysteine 50, cysteine 72–cysteine 92, and cysteine 80–cysteine 88. In terms of domain architecture, Laminin N-terminal spans 46 to 296 (DYTACQPEST…AISDIKVRGR (251 aa)). Residues 80-91 (CAMGNPYMCNNE) are NGL discriminant loop I. Residue asparagine 133 is glycosylated (N-linked (GlcNAc...) asparagine). Cysteine 182 and cysteine 206 are disulfide-bonded. The NGL discriminant loop II stretch occupies residues 208 to 214 (EEYSTGY). The NGL discriminant loop III stretch occupies residues 273 to 275 (EIF). Cystine bridges form between cysteine 297-cysteine 306, cysteine 299-cysteine 315, cysteine 317-cysteine 326, cysteine 329-cysteine 354, cysteine 364-cysteine 373, cysteine 366-cysteine 384, cysteine 387-cysteine 396, cysteine 399-cysteine 417, cysteine 420-cysteine 432, cysteine 422-cysteine 438, cysteine 440-cysteine 449, cysteine 452-cysteine 462, and cysteine 488-cysteine 497. Laminin EGF-like domains lie at 297–356 (CKCN…TCIP), 364–419 (CECF…VCIE), and 420–469 (CYCN…VCDN). Asparagine 320 is a glycosylation site (N-linked (GlcNAc...) asparagine). Asparagine 406 is a glycosylation site (N-linked (GlcNAc...) asparagine). Residue asparagine 433 is glycosylated (N-linked (GlcNAc...) asparagine). Serine 510 is lipidated: GPI-anchor amidated serine. Residues 511–539 (ESGQGAPPRGSPALLLLTMLLGTAGPLVF) constitute a propeptide, removed in mature form.

N-glycosylated. As to expression, expression is restricted primarily to neurons of the CNS, particularly in the dorsal thalamus, olfactory bulb and inferior colliculus. Isoform 1A and isoform 1D are the major products in adult brain.

Its subcellular location is the cell membrane. Functionally, involved in controlling patterning and neuronal circuit formation at the laminar, cellular, subcellular and synaptic levels. Promotes neurite outgrowth of both axons and dendrites. The sequence is that of Netrin-G1 (Ntng1) from Mus musculus (Mouse).